A 223-amino-acid chain; its full sequence is Methanol utilization control regulatory protein MoxX (223 aa).

The region spanning 16–133 (QILIVDDHPV…EICAAFTEVA (118 aa)) is the Response regulatory domain. The region spanning 155–220 (PGTSAPRLTG…DLVVKGIRYF (66 aa)) is the HTH luxR-type domain. Residues 179 to 198 (YRDIADRACISYKTVSNVSL) constitute a DNA-binding region (H-T-H motif).

In terms of processing, phosphorylated by MoxY.

The protein resides in the cytoplasm. Functionally, member of the two-component regulatory system MoxY/MoxX probably involved in the regulation of the methanol dehydrogenase expression. The protein is Methanol utilization control regulatory protein MoxX (moxX) of Paracoccus denitrificans.